We begin with the raw amino-acid sequence, 357 residues long: tRNA/tmRNA (uracil-C(5))-methyltransferase (357 aa).

S-adenosyl-L-methionine contacts are provided by glutamine 180, tyrosine 209, asparagine 214, glutamate 230, and aspartate 290. Cysteine 315 functions as the Nucleophile in the catalytic mechanism. The Proton acceptor role is filled by glutamate 349.

Belongs to the class I-like SAM-binding methyltransferase superfamily. RNA M5U methyltransferase family. TrmA subfamily.

The enzyme catalyses uridine(54) in tRNA + S-adenosyl-L-methionine = 5-methyluridine(54) in tRNA + S-adenosyl-L-homocysteine + H(+). It catalyses the reaction uridine(341) in tmRNA + S-adenosyl-L-methionine = 5-methyluridine(341) in tmRNA + S-adenosyl-L-homocysteine + H(+). Dual-specificity methyltransferase that catalyzes the formation of 5-methyluridine at position 54 (m5U54) in all tRNAs, and that of position 341 (m5U341) in tmRNA (transfer-mRNA). The polypeptide is tRNA/tmRNA (uracil-C(5))-methyltransferase (Campylobacter jejuni subsp. jejuni serotype O:2 (strain ATCC 700819 / NCTC 11168)).